A 461-amino-acid polypeptide reads, in one-letter code: FAD-dependent monooxygenase nodY2 (461 aa).

Positions 48 and 136 each coordinate FAD. Residue arginine 214 is part of the active site. 2 residues coordinate FAD: aspartate 338 and glycine 351.

This sequence belongs to the paxM FAD-dependent monooxygenase family. FAD is required as a cofactor.

The protein operates within secondary metabolite biosynthesis. Functionally, FAD-dependent monooxygenase; part of the gene cluster that mediates the biosynthesis of the indole diterpenes nodulisporic acids (NA). Nodulisporic acid A (NAA) and its chemically modified derivatives are of particular significance because of their highly potent insecticidal activity against blood-feeding arthropods and lack of observable adverse effects on mammals, in particular the tremogenicity associated with the paspaline-derived IDTs is not observed. The geranylgeranyl diphosphate (GGPP) synthase ggs1, localized outside of the cluster, is proposed to catalyze the first step in nodulisporic acid biosynthesis via conversion of farnesyl pyrophosphate and isopentyl pyrophosphate into geranylgeranyl pyrophosphate (GGPP). Condensation of indole-3-glycerol phosphate with GGPP by the prenyl transferase nodC then forms 3-geranylgeranylindole (3-GGI). Epoxidation by the FAD-dependent monooxygenase nodM leads to a single-epoxidized-GGI that is substrate of the terpene cyclase nodB for cyclization to yield emindole SB. The terminal methyl carbon, C28, of emindole SB is then oxidized by the cytochrome P450 monooxygenase nodW to produce nodulisporic acid F (NAF), the pentacyclic core of NAA. NAF is converted to nodulisporic acid E (NAE) via prenylation. This step is probably performed by one of the indole diterpene prenyltransferases nodD1 or nodD2. Several oxidation steps performed by the FAD-linked oxidoreductase nodO and one of the cytochrome P450 monooxygenase nodR, nodX or nodZ further convert NAE to nodulisporic acid D (NAD). NAD is substrate of cytochrome P450 monooxygenase nodJ to produce the precursor of nodulisporic acid C (NAC), converted to NAC by one of the indole diterpene prenyltransferases nodD1 or nodD2. The FAD-dependent monooxygenase nodY2 then oxidizes NAC to nodulisporic acid B (NAB). Finally NAB is converted to NAA by one of the cytochrome P450 monooxygenases nodR, nodX or nodZ. This chain is FAD-dependent monooxygenase nodY2, found in Hypoxylon pulicicidum.